Consider the following 200-residue polypeptide: Probable nicotinate-nucleotide adenylyltransferase (200 aa).

It belongs to the NadD family.

It carries out the reaction nicotinate beta-D-ribonucleotide + ATP + H(+) = deamido-NAD(+) + diphosphate. Its pathway is cofactor biosynthesis; NAD(+) biosynthesis; deamido-NAD(+) from nicotinate D-ribonucleotide: step 1/1. Catalyzes the reversible adenylation of nicotinate mononucleotide (NaMN) to nicotinic acid adenine dinucleotide (NaAD). In Clostridium botulinum (strain Eklund 17B / Type B), this protein is Probable nicotinate-nucleotide adenylyltransferase.